We begin with the raw amino-acid sequence, 125 residues long: Large ribosomal subunit protein bL12 (125 aa).

The protein belongs to the bacterial ribosomal protein bL12 family. In terms of assembly, homodimer. Part of the ribosomal stalk of the 50S ribosomal subunit. Forms a multimeric L10(L12)X complex, where L10 forms an elongated spine to which 2 to 4 L12 dimers bind in a sequential fashion. Binds GTP-bound translation factors.

Forms part of the ribosomal stalk which helps the ribosome interact with GTP-bound translation factors. Is thus essential for accurate translation. The polypeptide is Large ribosomal subunit protein bL12 (Bradyrhizobium sp. (strain BTAi1 / ATCC BAA-1182)).